Reading from the N-terminus, the 382-residue chain is Succinate--CoA ligase [ADP-forming] subunit beta (382 aa).

An ATP-grasp domain is found at 9–240; it reads KELFSKYGVK…PRDVSEFEMY (232 aa). ATP is bound by residues K45, 52–54, V94, and E99; that span reads GRG. Mg(2+)-binding residues include N193 and D207. Substrate is bound by residues N260 and 317–319; that span reads GIT.

This sequence belongs to the succinate/malate CoA ligase beta subunit family. In terms of assembly, heterotetramer of two alpha and two beta subunits. It depends on Mg(2+) as a cofactor.

The enzyme catalyses succinate + ATP + CoA = succinyl-CoA + ADP + phosphate. It carries out the reaction GTP + succinate + CoA = succinyl-CoA + GDP + phosphate. It functions in the pathway carbohydrate metabolism; tricarboxylic acid cycle; succinate from succinyl-CoA (ligase route): step 1/1. In terms of biological role, succinyl-CoA synthetase functions in the citric acid cycle (TCA), coupling the hydrolysis of succinyl-CoA to the synthesis of either ATP or GTP and thus represents the only step of substrate-level phosphorylation in the TCA. The beta subunit provides nucleotide specificity of the enzyme and binds the substrate succinate, while the binding sites for coenzyme A and phosphate are found in the alpha subunit. In Pyrobaculum arsenaticum (strain DSM 13514 / JCM 11321 / PZ6), this protein is Succinate--CoA ligase [ADP-forming] subunit beta.